A 216-amino-acid chain; its full sequence is 3-isopropylmalate dehydratase small subunit (216 aa).

This sequence belongs to the LeuD family. LeuD type 1 subfamily. Heterodimer of LeuC and LeuD.

The enzyme catalyses (2R,3S)-3-isopropylmalate = (2S)-2-isopropylmalate. It participates in amino-acid biosynthesis; L-leucine biosynthesis; L-leucine from 3-methyl-2-oxobutanoate: step 2/4. In terms of biological role, catalyzes the isomerization between 2-isopropylmalate and 3-isopropylmalate, via the formation of 2-isopropylmaleate. This chain is 3-isopropylmalate dehydratase small subunit, found in Psychrobacter sp. (strain PRwf-1).